The chain runs to 153 residues: Glucose-6-phosphate 1-dehydrogenase (153 aa).

NADP(+) is bound by residues Arg-21 and Lys-120. D-glucose 6-phosphate is bound at residue Lys-120.

It belongs to the glucose-6-phosphate dehydrogenase family.

The protein localises to the cytoplasm. It is found in the cytosol. It catalyses the reaction D-glucose 6-phosphate + NADP(+) = 6-phospho-D-glucono-1,5-lactone + NADPH + H(+). The protein operates within carbohydrate degradation; pentose phosphate pathway; D-ribulose 5-phosphate from D-glucose 6-phosphate (oxidative stage): step 1/3. In terms of biological role, cytosolic glucose-6-phosphate dehydrogenase that catalyzes the first and rate-limiting step of the oxidative branch within the pentose phosphate pathway/shunt, an alternative route to glycolysis for the dissimilation of carbohydrates and a major source of reducing power and metabolic intermediates for fatty acid and nucleic acid biosynthetic processes. This is Glucose-6-phosphate 1-dehydrogenase (Zw) from Drosophila simulans (Fruit fly).